Consider the following 171-residue polypeptide: T-cell surface glycoprotein CD3 delta chain (171 aa).

A signal peptide spans Met1–Pro21. Residues Tyr22 to Leu104 are Extracellular-facing. A disulfide bond links Cys37 and Cys72. Residue Asn38 is glycosylated (N-linked (GlcNAc...) asparagine). Residues Ala105–Phe125 form a helical membrane-spanning segment. Over Ala126–Lys171 the chain is Cytoplasmic. The ITAM domain occupies Asp138 to Asn166. Phosphotyrosine occurs at positions 149 and 160.

The TCR-CD3 complex is composed of a CD3D/CD3E and a CD3G/CD3E heterodimers that preferentially associate with TCRalpha and TCRbeta, respectively, to form TCRalpha/CD3E/CD3G and TCRbeta/CD3G/CD3E trimers. In turn, the hexamer interacts with CD3Z homodimer to form the TCR-CD3 complex. Alternatively, TCRalpha and TCRbeta can be replaced by TCRgamma and TCRdelta. Interacts with coreceptors CD4 and CD8. Phosphorylated on Tyr residues after T-cell receptor triggering by LCK in association with CD4/CD8. As to expression, CD3D is mostly present on T-lymphocytes with its TCR-CD3 partners. Present also in fetal NK-cells.

It localises to the cell membrane. In terms of biological role, part of the TCR-CD3 complex present on T-lymphocyte cell surface that plays an essential role in adaptive immune response. When antigen presenting cells (APCs) activate T-cell receptor (TCR), TCR-mediated signals are transmitted across the cell membrane by the CD3 chains CD3D, CD3E, CD3G and CD3Z. All CD3 chains contain immunoreceptor tyrosine-based activation motifs (ITAMs) in their cytoplasmic domain. Upon TCR engagement, these motifs become phosphorylated by Src family protein tyrosine kinases LCK and FYN, resulting in the activation of downstream signaling pathways. In addition of this role of signal transduction in T-cell activation, CD3D plays an essential role in thymocyte differentiation. Indeed, participates in correct intracellular TCR-CD3 complex assembly and surface expression. In absence of a functional TCR-CD3 complex, thymocytes are unable to differentiate properly. Interacts with CD4 and CD8 and thus serves to establish a functional link between the TCR and coreceptors CD4 and CD8, which is needed for activation and positive selection of CD4 or CD8 T-cells. The protein is T-cell surface glycoprotein CD3 delta chain (CD3D) of Sus scrofa (Pig).